A 178-amino-acid chain; its full sequence is ATP synthase subunit delta (178 aa).

This sequence belongs to the ATPase delta chain family. F-type ATPases have 2 components, F(1) - the catalytic core - and F(0) - the membrane proton channel. F(1) has five subunits: alpha(3), beta(3), gamma(1), delta(1), epsilon(1). F(0) has three main subunits: a(1), b(2) and c(10-14). The alpha and beta chains form an alternating ring which encloses part of the gamma chain. F(1) is attached to F(0) by a central stalk formed by the gamma and epsilon chains, while a peripheral stalk is formed by the delta and b chains.

The protein resides in the cell membrane. Its function is as follows. F(1)F(0) ATP synthase produces ATP from ADP in the presence of a proton or sodium gradient. F-type ATPases consist of two structural domains, F(1) containing the extramembraneous catalytic core and F(0) containing the membrane proton channel, linked together by a central stalk and a peripheral stalk. During catalysis, ATP synthesis in the catalytic domain of F(1) is coupled via a rotary mechanism of the central stalk subunits to proton translocation. In terms of biological role, this protein is part of the stalk that links CF(0) to CF(1). It either transmits conformational changes from CF(0) to CF(1) or is implicated in proton conduction. This is ATP synthase subunit delta from Streptococcus gordonii (strain Challis / ATCC 35105 / BCRC 15272 / CH1 / DL1 / V288).